Reading from the N-terminus, the 358-residue chain is Peptide chain release factor 1 (358 aa).

Q234 carries the N5-methylglutamine modification.

Belongs to the prokaryotic/mitochondrial release factor family. In terms of processing, methylated by PrmC. Methylation increases the termination efficiency of RF1.

Its subcellular location is the cytoplasm. Its function is as follows. Peptide chain release factor 1 directs the termination of translation in response to the peptide chain termination codons UAG and UAA. The chain is Peptide chain release factor 1 from Leifsonia xyli subsp. xyli (strain CTCB07).